Consider the following 60-residue polypeptide: Ribosome modulation factor (60 aa).

This sequence belongs to the ribosome modulation factor family.

It localises to the cytoplasm. In terms of biological role, during stationary phase, converts 70S ribosomes to an inactive dimeric form (100S ribosomes). The polypeptide is Ribosome modulation factor (Kangiella koreensis (strain DSM 16069 / JCM 12317 / KCTC 12182 / SW-125)).